Consider the following 79-residue polypeptide: Small ribosomal subunit protein bS16c (79 aa).

This sequence belongs to the bacterial ribosomal protein bS16 family.

The protein resides in the plastid. It localises to the chloroplast. In Staurastrum punctulatum (Green alga), this protein is Small ribosomal subunit protein bS16c.